The following is a 182-amino-acid chain: uncharacterized protein (182 aa).

Disordered regions lie at residues 1-49 (MAAP…DGGS) and 126-171 (QGGH…VHAQ). Residues 17–39 (ELLEKAARLERGPPPRGDPEAVG) show a composition bias toward basic and acidic residues.

This is an uncharacterized protein from Homo sapiens (Human).